Here is a 665-residue protein sequence, read N- to C-terminus: UvrABC system protein B (665 aa).

The Helicase ATP-binding domain occupies D31–Q414. Residue G44–T51 participates in ATP binding. Positions Y97–I120 match the Beta-hairpin motif. The 167-residue stretch at Q435–I601 folds into the Helicase C-terminal domain. Residues A629–A664 enclose the UVR domain.

It belongs to the UvrB family. As to quaternary structure, forms a heterotetramer with UvrA during the search for lesions. Interacts with UvrC in an incision complex.

The protein localises to the cytoplasm. Functionally, the UvrABC repair system catalyzes the recognition and processing of DNA lesions. A damage recognition complex composed of 2 UvrA and 2 UvrB subunits scans DNA for abnormalities. Upon binding of the UvrA(2)B(2) complex to a putative damaged site, the DNA wraps around one UvrB monomer. DNA wrap is dependent on ATP binding by UvrB and probably causes local melting of the DNA helix, facilitating insertion of UvrB beta-hairpin between the DNA strands. Then UvrB probes one DNA strand for the presence of a lesion. If a lesion is found the UvrA subunits dissociate and the UvrB-DNA preincision complex is formed. This complex is subsequently bound by UvrC and the second UvrB is released. If no lesion is found, the DNA wraps around the other UvrB subunit that will check the other stand for damage. The protein is UvrABC system protein B of Enterococcus faecalis (strain ATCC 700802 / V583).